A 426-amino-acid chain; its full sequence is D-tagatose-1,6-bisphosphate aldolase subunit KbaZ (426 aa).

This sequence belongs to the GatZ/KbaZ family. KbaZ subfamily. As to quaternary structure, forms a complex with KbaY.

It functions in the pathway carbohydrate metabolism; D-tagatose 6-phosphate degradation; D-glyceraldehyde 3-phosphate and glycerone phosphate from D-tagatose 6-phosphate: step 2/2. In terms of biological role, component of the tagatose-1,6-bisphosphate aldolase KbaYZ that is required for full activity and stability of the Y subunit. Could have a chaperone-like function for the proper and stable folding of KbaY. When expressed alone, KbaZ does not show any aldolase activity. This chain is D-tagatose-1,6-bisphosphate aldolase subunit KbaZ, found in Escherichia coli O127:H6 (strain E2348/69 / EPEC).